Consider the following 308-residue polypeptide: 1D-myo-inositol 2-acetamido-2-deoxy-alpha-D-glucopyranoside deacetylase (308 aa).

Zn(2+)-binding residues include histidine 13, aspartate 16, and histidine 147.

It belongs to the MshB deacetylase family. Zn(2+) serves as cofactor.

The catalysed reaction is 1D-myo-inositol 2-acetamido-2-deoxy-alpha-D-glucopyranoside + H2O = 1D-myo-inositol 2-amino-2-deoxy-alpha-D-glucopyranoside + acetate. In terms of biological role, catalyzes the deacetylation of 1D-myo-inositol 2-acetamido-2-deoxy-alpha-D-glucopyranoside (GlcNAc-Ins) in the mycothiol biosynthesis pathway. The chain is 1D-myo-inositol 2-acetamido-2-deoxy-alpha-D-glucopyranoside deacetylase from Mycobacterium leprae (strain Br4923).